Here is a 105-residue protein sequence, read N- to C-terminus: Small ribosomal subunit protein uS10 (105 aa).

The protein belongs to the universal ribosomal protein uS10 family. As to quaternary structure, part of the 30S ribosomal subunit.

Functionally, involved in the binding of tRNA to the ribosomes. The polypeptide is Small ribosomal subunit protein uS10 (Chlamydia abortus (strain DSM 27085 / S26/3) (Chlamydophila abortus)).